The sequence spans 309 residues: Porphobilinogen deaminase (309 aa).

Residue Cys-241 is modified to S-(dipyrrolylmethanemethyl)cysteine.

This sequence belongs to the HMBS family. Monomer. It depends on dipyrromethane as a cofactor.

The enzyme catalyses 4 porphobilinogen + H2O = hydroxymethylbilane + 4 NH4(+). It participates in porphyrin-containing compound metabolism; protoporphyrin-IX biosynthesis; coproporphyrinogen-III from 5-aminolevulinate: step 2/4. Functionally, tetrapolymerization of the monopyrrole PBG into the hydroxymethylbilane pre-uroporphyrinogen in several discrete steps. This Bacillus cereus (strain G9842) protein is Porphobilinogen deaminase.